Consider the following 44-residue polypeptide: Protein PsbN (44 aa).

A helical transmembrane segment spans residues 6–26 (FFFTIFLWCLLLSITGYSIYV).

It belongs to the PsbN family.

The protein localises to the plastid. The protein resides in the chloroplast thylakoid membrane. In terms of biological role, may play a role in photosystem I and II biogenesis. The sequence is that of Protein PsbN from Chlorella vulgaris (Green alga).